Reading from the N-terminus, the 218-residue chain is Protein GrpE (218 aa).

Composition is skewed to basic and acidic residues over residues 1 to 13 (MSKN…HQNN) and 20 to 32 (VDKK…NKQE). Positions 1–32 (MSKNNENIKHQNNDKVNNQVDKKETKNHNKQE) are disordered.

The protein belongs to the GrpE family. Homodimer.

It localises to the cytoplasm. Participates actively in the response to hyperosmotic and heat shock by preventing the aggregation of stress-denatured proteins, in association with DnaK and GrpE. It is the nucleotide exchange factor for DnaK and may function as a thermosensor. Unfolded proteins bind initially to DnaJ; upon interaction with the DnaJ-bound protein, DnaK hydrolyzes its bound ATP, resulting in the formation of a stable complex. GrpE releases ADP from DnaK; ATP binding to DnaK triggers the release of the substrate protein, thus completing the reaction cycle. Several rounds of ATP-dependent interactions between DnaJ, DnaK and GrpE are required for fully efficient folding. This chain is Protein GrpE, found in Ureaplasma parvum serovar 3 (strain ATCC 27815 / 27 / NCTC 11736).